The following is a 412-amino-acid chain: Protein ALF (412 aa).

Disordered stretches follow at residues 1–47 and 154–234; these read MDPE…PLPP and GLSE…GISE. The segment covering 31-47 has biased composition (pro residues); the sequence is PPQPPPPPLPPPQPLPP. Basic residues predominate over residues 187–196; that stretch reads MRQRRRKKVV. The segment covering 206–221 has biased composition (acidic residues); sequence MEEDEDTEEGQEDNED. 3 DNA-binding regions span residues 237–241, 306–313, and 377–380; these read REHPF, NKPKMRHY, and YVPT.

This sequence belongs to the FLO/LFY family. Expressed in the floral meristem and also in the vegetative meristem.

It is found in the nucleus. Its function is as follows. Probable transcription factor required for the specification of floral meristem identity. The sequence is that of Protein ALF (ALF) from Petunia hybrida (Petunia).